Consider the following 343-residue polypeptide: Glucokinase (343 aa).

18–23 (GDIGGT) serves as a coordination point for ATP.

The protein belongs to the bacterial glucokinase family.

It is found in the cytoplasm. It carries out the reaction D-glucose + ATP = D-glucose 6-phosphate + ADP + H(+). The protein is Glucokinase of Brucella suis biovar 1 (strain 1330).